The sequence spans 102 residues: ATP-dependent Clp protease adapter protein ClpS (102 aa).

It belongs to the ClpS family. Binds to the N-terminal domain of the chaperone ClpA.

Involved in the modulation of the specificity of the ClpAP-mediated ATP-dependent protein degradation. In Shewanella putrefaciens (strain CN-32 / ATCC BAA-453), this protein is ATP-dependent Clp protease adapter protein ClpS.